The primary structure comprises 334 residues: Protein-methionine-sulfoxide reductase catalytic subunit MsrP (334 aa).

Residues 1-44 (MKAVNPLTENDVTPESLFNARRRTVLKMLGMSAAALSLPGAARA) constitute a signal peptide (tat-type signal). Residues Asn88, 91–92 (YE), Cys146, Thr181, Asn233, Arg238, and 249–251 (GIK) contribute to the Mo-molybdopterin site.

Belongs to the MsrP family. Heterodimer of a catalytic subunit (MsrP) and a heme-binding subunit (MsrQ). The cofactor is Mo-molybdopterin. Predicted to be exported by the Tat system. The position of the signal peptide cleavage has not been experimentally proven.

It localises to the periplasm. It carries out the reaction L-methionyl-[protein] + a quinone + H2O = L-methionyl-(S)-S-oxide-[protein] + a quinol. The enzyme catalyses L-methionyl-[protein] + a quinone + H2O = L-methionyl-(R)-S-oxide-[protein] + a quinol. Part of the MsrPQ system that repairs oxidized periplasmic proteins containing methionine sulfoxide residues (Met-O), using respiratory chain electrons. Thus protects these proteins from oxidative-stress damage caused by reactive species of oxygen and chlorine generated by the host defense mechanisms. MsrPQ is essential for the maintenance of envelope integrity under bleach stress, rescuing a wide series of structurally unrelated periplasmic proteins from methionine oxidation. The catalytic subunit MsrP is non-stereospecific, being able to reduce both (R-) and (S-) diastereoisomers of methionine sulfoxide. In Erwinia tasmaniensis (strain DSM 17950 / CFBP 7177 / CIP 109463 / NCPPB 4357 / Et1/99), this protein is Protein-methionine-sulfoxide reductase catalytic subunit MsrP.